The primary structure comprises 96 residues: MNLNEDSLRKIAELSRLNIRPKEKEATLRDFNKILEYVDQVKGLDVSSIRDDEIYFRHENSIRPDLVGQHLSREEIEKFAPSFQNGYFVVPKVIET.

Belongs to the GatC family. As to quaternary structure, heterotrimer of A, B and C subunits.

The catalysed reaction is L-glutamyl-tRNA(Gln) + L-glutamine + ATP + H2O = L-glutaminyl-tRNA(Gln) + L-glutamate + ADP + phosphate + H(+). It carries out the reaction L-aspartyl-tRNA(Asn) + L-glutamine + ATP + H2O = L-asparaginyl-tRNA(Asn) + L-glutamate + ADP + phosphate + 2 H(+). In terms of biological role, allows the formation of correctly charged Asn-tRNA(Asn) or Gln-tRNA(Gln) through the transamidation of misacylated Asp-tRNA(Asn) or Glu-tRNA(Gln) in organisms which lack either or both of asparaginyl-tRNA or glutaminyl-tRNA synthetases. The reaction takes place in the presence of glutamine and ATP through an activated phospho-Asp-tRNA(Asn) or phospho-Glu-tRNA(Gln). This chain is Aspartyl/glutamyl-tRNA(Asn/Gln) amidotransferase subunit C, found in Leptospira borgpetersenii serovar Hardjo-bovis (strain JB197).